The chain runs to 600 residues: KIF-binding protein (600 aa).

Residues 384-434 (KAENEATEYSKIMQDYAEAYEHIAFFEENPENQAKMQKRRAKYLEDLLDLL) adopt a coiled-coil conformation.

The protein belongs to the KIF-binding protein family.

Its subcellular location is the cytoplasm. It is found in the cytoskeleton. The sequence is that of KIF-binding protein from Drosophila melanogaster (Fruit fly).